The following is a 281-amino-acid chain: sn-glycerol-3-phosphate transport system permease protein UgpE (281 aa).

Transmembrane regions (helical) follow at residues 16-36 (LILG…AATL), 85-105 (FSIT…IVWF), 113-133 (FFWM…FPTV), 142-162 (LDSY…TFLF), 202-222 (ALFV…LLII), and 247-267 (WNSV…IVLV). The ABC transmembrane type-1 domain maps to 77–268 (LLNSFVMAFS…IPPVVIVLVM (192 aa)).

Belongs to the binding-protein-dependent transport system permease family. UgpAE subfamily. As to quaternary structure, the complex is composed of two ATP-binding proteins (UgpC), two transmembrane proteins (UgpA and UgpE) and a solute-binding protein (UgpB).

It localises to the cell inner membrane. Its function is as follows. Part of the ABC transporter complex UgpBAEC involved in sn-glycerol-3-phosphate (G3P) import. Probably responsible for the translocation of the substrate across the membrane. This chain is sn-glycerol-3-phosphate transport system permease protein UgpE (ugpE), found in Shigella dysenteriae serotype 1 (strain Sd197).